The sequence spans 259 residues: NAD kinase (259 aa).

The active-site Proton acceptor is aspartate 43. Residues 43–44, 111–112, and arginine 136 each bind NAD(+); these read DG and NE.

This sequence belongs to the NAD kinase family. A divalent metal cation is required as a cofactor.

The protein localises to the cytoplasm. It catalyses the reaction NAD(+) + ATP = ADP + NADP(+) + H(+). Its function is as follows. Involved in the regulation of the intracellular balance of NAD and NADP, and is a key enzyme in the biosynthesis of NADP. Catalyzes specifically the phosphorylation on 2'-hydroxyl of the adenosine moiety of NAD to yield NADP. The chain is NAD kinase from Mycoplasma pneumoniae (strain ATCC 29342 / M129 / Subtype 1) (Mycoplasmoides pneumoniae).